A 313-amino-acid chain; its full sequence is Chemotaxis protein CheV2 (313 aa).

The 157-residue stretch at 16–172 (EAQFLCFRLD…VEKMISDVFP (157 aa)) folds into the CheW-like domain. One can recognise a Response regulatory domain in the interval 193–313 (LILIAEDSLS…IHEMLKKTLS (121 aa)). D246 is subject to 4-aspartylphosphate.

Post-translationally, phosphorylated; probably by transfer of CheAY phosphate group.

Plays a role in chemotaxis signal transduction system in order to colonize the host stomach. May act as a phosphate sink to control the flow of phosphate to CheAY. The chain is Chemotaxis protein CheV2 from Helicobacter pylori (strain ATCC 700392 / 26695) (Campylobacter pylori).